Here is a 206-residue protein sequence, read N- to C-terminus: Ion-translocating oxidoreductase complex subunit G (206 aa).

The chain crosses the membrane as a helical span at residues 9-29; it reads GITLALFAAGSTGLTAAINQM. At threonine 174 the chain carries FMN phosphoryl threonine.

This sequence belongs to the RnfG family. In terms of assembly, the complex is composed of six subunits: RsxA, RsxB, RsxC, RsxD, RsxE and RsxG. FMN serves as cofactor.

The protein localises to the cell inner membrane. Its function is as follows. Part of a membrane-bound complex that couples electron transfer with translocation of ions across the membrane. Required to maintain the reduced state of SoxR. Probably transfers electron from NAD(P)H to SoxR. This Escherichia coli (strain K12) protein is Ion-translocating oxidoreductase complex subunit G.